The chain runs to 623 residues: Xaa-Pro aminopeptidase 1 (623 aa).

Residue Arg-77 participates in a peptide binding. At Lys-304 the chain carries N6-acetyllysine. His-395 lines the a peptide pocket. Residues Asp-415, Asp-426, and His-489 each contribute to the Mn(2+) site. The a peptide site is built by His-489, His-498, and Glu-523. Positions 523 and 537 each coordinate Mn(2+).

This sequence belongs to the peptidase M24B family. As to quaternary structure, homodimer. Requires Mn(2+) as cofactor. In terms of tissue distribution, expressed in all tissues tested, including pancreas, heart, muscle, kidney, liver, lung and brain. Highest levels in pancreas.

The protein resides in the cytoplasm. It is found in the cytosol. The enzyme catalyses Release of any N-terminal amino acid, including proline, that is linked to proline, even from a dipeptide or tripeptide.. Its activity is regulated as follows. Inhibited by apstatin and the metal ion chelators EDTA and 1,10-phenanthroline. Partially inhibited by dithiothreitol. Not inhibited by enalaprilat or amastatin. Specifically inhibited by the pseudodipeptide CQ31. Inhibition by CQ31 indirectly activates the CARD8 inflammasome: dipeptide accumulation following PEPD inactivation weaky inhibit dipeptidyl peptidases DDP8 and DPP9, relieving DPP8- and/or DPP9-mediated inhibition of CARD8. In terms of biological role, metalloaminopeptidase that catalyzes the removal of a penultimate prolyl residue from the N-termini of peptides, such as Arg-Pro-Pro. Contributes to the degradation of bradykinin. The sequence is that of Xaa-Pro aminopeptidase 1 from Homo sapiens (Human).